The following is a 471-amino-acid chain: L-amino acid dehydrogenase (471 aa).

Position 31 (glycine 31) interacts with Mg(2+). Serine 33 provides a ligand contact to FAD. Glycine 34 contributes to the Mg(2+) binding site. Residues glutamate 52, arginine 60, and valine 256 each contribute to the FAD site. Alanine 283 contacts Mg(2+). Residue phenylalanine 453 participates in FAD binding.

The protein belongs to the flavin monoamine oxidase family. The cofactor is FAD. It depends on Mg(2+) as a cofactor.

It localises to the cellular thylakoid membrane. The catalysed reaction is a plastoquinone + an L-alpha-amino acid + H2O = a plastoquinol + a 2-oxocarboxylate + NH4(+). The enzyme catalyses a plastoquinone + L-arginine + H2O = a plastoquinol + 5-guanidino-2-oxopentanoate + NH4(+). It participates in amino-acid degradation; L-arginine degradation. Its activity is regulated as follows. Inhibited by Ca(2+) and other cations such as Ni(2+), Co(2+) and Zn(2+). The inhibition by o-phenanthroline and salicylhydroxamic acid suggests the presence of a metal cofactor besides FAD in the enzyme. The L-arginine-stimulated O(2) consumption involving slr0782 is inhibited by inhibitors of the respiratory electron transport chain, such as KCN and 2,5-dibromo-3-methyl-6-isopropyl-p-benzoquinone, which indicates a participation of the cytochrome b6/f complex and of a cytochrome oxidase. L-amino acid dehydrogenase with broad substrate specificity. Catalyzes the oxidative deamination of various L-amino acids, L-Arg and L-Cys being the best substrates in vitro. Likely functions mainly as an L-arginine dehydrogenase in vivo. Probably feeds electrons from L-arginine oxidation and also from the oxidation of other L-amino acids into the respiratory electron transport chain associated to the thylakoid membrane, and does not directly interact with molecular oxygen but donates electrons to the plastoquinone pool. Cannot use D-amino acids as substrates. The chain is L-amino acid dehydrogenase from Synechocystis sp. (strain ATCC 27184 / PCC 6803 / Kazusa).